A 468-amino-acid chain; its full sequence is Glutamate--tRNA ligase (468 aa).

The 'HIGH' region motif lies at 8–18; it reads PSPTGFLHVGG. Cys-97, Cys-99, Cys-124, and Asp-126 together coordinate Zn(2+). The 'KMSKS' region motif lies at 236–240; the sequence is KLSKR. Lys-239 provides a ligand contact to ATP.

Belongs to the class-I aminoacyl-tRNA synthetase family. Glutamate--tRNA ligase type 1 subfamily. Monomer. Requires Zn(2+) as cofactor.

The protein localises to the cytoplasm. It catalyses the reaction tRNA(Glu) + L-glutamate + ATP = L-glutamyl-tRNA(Glu) + AMP + diphosphate. In terms of biological role, catalyzes the attachment of glutamate to tRNA(Glu) in a two-step reaction: glutamate is first activated by ATP to form Glu-AMP and then transferred to the acceptor end of tRNA(Glu). The sequence is that of Glutamate--tRNA ligase from Francisella tularensis subsp. novicida (strain U112).